Here is a 544-residue protein sequence, read N- to C-terminus: NAD(P)H-quinone oxidoreductase chain 4 (544 aa).

Helical transmembrane passes span 29–49 (FPWLTTAILLPIAASLAIPLV), 60–80 (WYALGVSLTTFLITVGAYLNG), 115–135 (LILLTSFITTLACLAAWPVTF), 139–159 (LFFFLLLAMDGGQIAVFAVQD), 161–181 (LLFFLAWELELIPVYLLLAIW), 193–213 (FILYTAVSSLFILLVALAMAF), 234–254 (GFQALCYAGLLIAFGVKLPIV), 268–288 (TAPVHMLLAGILLKMGGYALF), 302–322 (FAPLLVVLGVVNIIYAALTSF), 339–359 (MGFVLIGIGSFSPLAASGAML), 360–380 (QMISHGLIGASLFFLVGATYD), 400–422 (MFAMWTACSLASLALPGMSGFVS), 442–462 (IVIDGAAAIGVILTPIYLLSM), and 488–508 (IYIISCLLVPIIGIGLYPKLV).

The protein belongs to the complex I subunit 4 family.

It localises to the cellular thylakoid membrane. It carries out the reaction a plastoquinone + NADH + (n+1) H(+)(in) = a plastoquinol + NAD(+) + n H(+)(out). The catalysed reaction is a plastoquinone + NADPH + (n+1) H(+)(in) = a plastoquinol + NADP(+) + n H(+)(out). Functionally, NDH-1 shuttles electrons from NAD(P)H, via FMN and iron-sulfur (Fe-S) centers, to quinones in the respiratory chain. The immediate electron acceptor for the enzyme in this species is believed to be plastoquinone. Couples the redox reaction to proton translocation (for every two electrons transferred, four hydrogen ions are translocated across the cytoplasmic membrane), and thus conserves the redox energy in a proton gradient. This is NAD(P)H-quinone oxidoreductase chain 4 from Synechococcus sp. (strain RCC307).